The primary structure comprises 209 residues: Protein GET1 (209 aa).

The Lumenal portion of the chain corresponds to 1-3 (MSL). The helical transmembrane segment at 4-23 (LLVIFLLELVVQLVNTIGAK) threads the bilayer. The Cytoplasmic portion of the chain corresponds to 24-110 (TINNLLWRFY…SFSRKLTIYR (87 aa)). Positions 74-101 (WARLQRKHDKLMDELEKKKSQLDAHRTS) form a coiled coil. The chain crosses the membrane as a helical span at residues 111 to 131 (WILTRGMQWFLCFWFSSQPMF). Over 132-155 (WLPYGWFPYWVEWLVSFPNAPMGS) the chain is Lumenal. Residues 156 to 172 (VSIVVWQSACSGVLALV) traverse the membrane as a helical segment. The Cytoplasmic segment spans residues 173-209 (IEAVMAVVRYTGGTGMQKQRQPVPAAGGAPGTSKKDL). The tract at residues 188-209 (MQKQRQPVPAAGGAPGTSKKDL) is disordered.

The protein belongs to the WRB/GET1 family. As to quaternary structure, interacts with GET3.

Its subcellular location is the endoplasmic reticulum membrane. Its function is as follows. Required for the post-translational delivery of tail-anchored (TA) proteins to the endoplasmic reticulum. Acts as a membrane receptor for soluble GET3, which recognizes and selectively binds the transmembrane domain of TA proteins in the cytosol. The chain is Protein GET1 from Chaetomium thermophilum (strain DSM 1495 / CBS 144.50 / IMI 039719) (Thermochaetoides thermophila).